Here is a 475-residue protein sequence, read N- to C-terminus: MTGKTLYDKLWEMHEVKRRDDGSSLIYIDRHILHEVTSPQAFEGLRLAGRKPWRIDANIATPDHNVPTTKAERQGGLEAIADEVSRIQVQTLDENCDDFGILEFKMNDVRQGIVHVVGPEQGATLPGMTVVCGDSHTSTHGAFGALAHGIGTSEVEHVLATQCLVAKKMKNMQVRVEGKLPFGVTAKDIVLAVIGKIGTAGGNGHALEFAGSAIRDLSLEGRMTICNMSIEAGARVGLVAVDEKTIAYVKDRPFAPKGSDWDKAVTQWQNLVSDADAVFDTVVELKAEDIKPQVSWGTSPEMVLAVDQNVPDPAVETDPVKKDSITRALKYMGLSANQPITDIQLDRVFIGSCTNSRIEDLRAAAEVAKGRKVASTVKQALVVPGSGLVKAQAEAEGLDKIFIEAGFEWREPGCSMCLAMNPDKLGSGEHCASTSNRNFEGRQGAGGRTHLVSPAMAAAAAVTGRFIDVRELIQA.

[4Fe-4S] cluster contacts are provided by C353, C414, and C417.

The protein belongs to the aconitase/IPM isomerase family. LeuC type 1 subfamily. As to quaternary structure, heterodimer of LeuC and LeuD. Requires [4Fe-4S] cluster as cofactor.

It catalyses the reaction (2R,3S)-3-isopropylmalate = (2S)-2-isopropylmalate. Its pathway is amino-acid biosynthesis; L-leucine biosynthesis; L-leucine from 3-methyl-2-oxobutanoate: step 2/4. In terms of biological role, catalyzes the isomerization between 2-isopropylmalate and 3-isopropylmalate, via the formation of 2-isopropylmaleate. This Ectopseudomonas mendocina (strain ymp) (Pseudomonas mendocina) protein is 3-isopropylmalate dehydratase large subunit.